A 749-amino-acid polypeptide reads, in one-letter code: Disintegrin and metalloproteinase domain-containing protein 10 (749 aa).

The signal sequence occupies residues 1-19 (MVLPTVLILLLSWAAGLGG). Positions 20–214 (QYGNPLNKYI…SGPELLRKKR (195 aa)) are excised as a propeptide. Over 20-673 (QYGNPLNKYI…SPQLYENIAE (654 aa)) the chain is Extracellular. The short motif at 171–178 (GGCADHSV) is the Cysteine switch element. Zn(2+) is bound at residue Cys-173. Residues 221–457 (NTCQLYIQTD…KRNNCFVESG (237 aa)) enclose the Peptidase M12B domain. Intrachain disulfides connect Cys-223/Cys-314, Cys-345/Cys-452, Cys-400/Cys-436, Cys-461/Cys-496, Cys-472/Cys-485, Cys-474/Cys-480, Cys-484/Cys-516, Cys-504/Cys-512, Cys-511/Cys-537, Cys-525/Cys-544, Cys-531/Cys-563, Cys-556/Cys-568, Cys-573/Cys-599, Cys-581/Cys-608, Cys-583/Cys-598, Cys-595/Cys-640, and Cys-633/Cys-646. Residues Asn-268 and Asn-279 are each glycosylated (N-linked (GlcNAc...) asparagine). His-384 contributes to the Zn(2+) binding site. Residue Glu-385 is part of the active site. The Zn(2+) site is built by His-388 and His-394. Residue Asn-440 is glycosylated (N-linked (GlcNAc...) asparagine). Residues 458 to 552 (QPICGNGMVE…LCPASDPKPN (95 aa)) form the Disintegrin domain. An N-linked (GlcNAc...) asparagine glycan is attached at Asn-552. A helical transmembrane segment spans residues 674 to 694 (WIVAHWWAVLLMGIALIMLMA). The Cytoplasmic segment spans residues 695–749 (GFIKICSVHTPSSNPKLPPPKPLPGTLKRRRPPQPIQQPPRQRPRESYQMGHMRR). The tract at residues 705 to 749 (PSSNPKLPPPKPLPGTLKRRRPPQPIQQPPRQRPRESYQMGHMRR) is disordered. Residues 709–716 (PKLPPPKP) carry the SH3-binding motif. Thr-720 is subject to Phosphothreonine. An SH3-binding motif is present at residues 723–729 (RRRPPQP). Residues 735–749 (RQRPRESYQMGHMRR) form an interaction with AP2A1, AP2A2 and AP2M1 region.

Forms a ternary EFNA5-EPHA3-ADAM10 complex mediating EFNA5 extracellular domain shedding by ADAM10 which regulates the EFNA5-EPHA3 complex internalization and function, the cleavage occurs in trans, with ADAM10 and its substrate being on the membranes of opposing cells. Interacts with the clathrin adapter AP2 complex subunits AP2A1, AP2A2, AP2B1, and AP2M1; this interaction facilitates ADAM10 endocytosis from the plasma membrane during long-term potentiation in hippocampal neurons. Forms a ternary complex composed of ADAM10, EPHA4 and CADH1; within the complex, ADAM10 cleaves CADH1 which disrupts adherens junctions. Interacts with EPHA2. Interacts with NGF in a divalent cation-dependent manner. Interacts with TSPAN14; the interaction promotes ADAM10 maturation and cell surface expression. Interacts with TSPAN5, TSPAN10, TSPAN14, TSPAN15, TSPAN17 and TSPAN33; these interactions regulate ADAM10 substrate specificity, endocytosis and turnover. Interacts (via extracellular domain) with TSPAN33 (via extracellular domain) and (via cytoplasmic domain) with AFDN; interaction with TSPAN33 allows the docking of ADAM10 to zonula adherens through a PDZ11-dependent interaction between TSPAN33 and PLEKHA7 while interaction with AFDN locks ADAM10 at zonula adherens. Interacts with DLG1; this interaction recruits ADAM10 to the cell membrane during long-term depression in hippocampal neurons. Interacts (via extracellular domain) with BACE1 (via extracellular domain). Interacts with FAM171A1. Zn(2+) is required as a cofactor. The precursor is cleaved by furin and PCSK7. As to expression, expressed in the brain, specifically in neurons and astrocytes (at protein level). Expressed in inner and outer pillar cells of the organ of Corti (at protein level). Expressed in kidney and lung.

It localises to the cell membrane. The protein localises to the golgi apparatus membrane. The protein resides in the cytoplasmic vesicle. It is found in the clathrin-coated vesicle. Its subcellular location is the cell projection. It localises to the axon. The protein localises to the dendrite. The protein resides in the cell junction. It is found in the adherens junction. Its subcellular location is the cytoplasm. It catalyses the reaction Endopeptidase of broad specificity.. With respect to regulation, catalytically inactive when the propeptide is intact and associated with the mature enzyme. The disintegrin and cysteine-rich regions modulate access of substrates to exerts an inhibitory effect on the cleavage of ADAM10 substrates. Transmembrane metalloprotease which mediates the ectodomain shedding of a myriad of transmembrane proteins, including adhesion proteins, growth factor precursors and cytokines being essential for development and tissue homeostasis. Associates with six members of the tetraspanin superfamily TspanC8 which regulate its exit from the endoplasmic reticulum and its substrate selectivity. Cleaves the membrane-bound precursor of TNF-alpha to its mature soluble form. Responsible for the proteolytical release of soluble JAM3 from endothelial cells surface. Responsible for the proteolytic release of several other cell-surface proteins, including heparin-binding epidermal growth-like factor, ephrin-A2, CD44, CDH2 and for constitutive and regulated alpha-secretase cleavage of amyloid precursor protein (APP) at '687-Lys-|-Leu-688'. Contributes to the normal cleavage of the cellular prion protein. Involved in the cleavage of the adhesion molecule L1 at the cell surface and in released membrane vesicles, suggesting a vesicle-based protease activity. Also controls the proteolytic processing of Notch and mediates lateral inhibition during neurogenesis. Required for the development of type 1 transitional B cells into marginal zone B cells, probably by cleaving Notch. Responsible for the FasL ectodomain shedding and for the generation of the remnant ADAM10-processed FasL (FasL APL) transmembrane form. Also cleaves the ectodomain of the integral membrane proteins CORIN and ITM2B. Mediates the proteolytic cleavage of LAG3, leading to release the secreted form of LAG3. Mediates the proteolytic cleavage of IL6R and IL11RA, leading to the release of secreted forms of IL6R and IL11RA. Enhances the cleavage of CHL1 by BACE1. Cleaves NRCAM. Cleaves TREM2, resulting in shedding of the TREM2 ectodomain. Involved in the development and maturation of glomerular and coronary vasculature. During development of the cochlear organ of Corti, promotes pillar cell separation by forming a ternary complex with CADH1 and EPHA4 and cleaving CADH1 at adherens junctions. May regulate the EFNA5-EPHA3 signaling. The chain is Disintegrin and metalloproteinase domain-containing protein 10 (Adam10) from Mus musculus (Mouse).